The primary structure comprises 194 residues: 3-isopropylmalate dehydratase small subunit (194 aa).

The protein belongs to the LeuD family. LeuD type 1 subfamily. As to quaternary structure, heterodimer of LeuC and LeuD.

It carries out the reaction (2R,3S)-3-isopropylmalate = (2S)-2-isopropylmalate. It participates in amino-acid biosynthesis; L-leucine biosynthesis; L-leucine from 3-methyl-2-oxobutanoate: step 2/4. Its function is as follows. Catalyzes the isomerization between 2-isopropylmalate and 3-isopropylmalate, via the formation of 2-isopropylmaleate. This is 3-isopropylmalate dehydratase small subunit from Halalkalibacterium halodurans (strain ATCC BAA-125 / DSM 18197 / FERM 7344 / JCM 9153 / C-125) (Bacillus halodurans).